We begin with the raw amino-acid sequence, 242 residues long: tRNA (guanine-N(7)-)-methyltransferase (242 aa).

Residues Glu-66, Glu-91, Asp-118, and Asp-141 each contribute to the S-adenosyl-L-methionine site. Asp-141 is an active-site residue. Substrate contacts are provided by residues Lys-145, Asp-177, and 214–217; that span reads TKFE.

This sequence belongs to the class I-like SAM-binding methyltransferase superfamily. TrmB family. Monomer.

The catalysed reaction is guanosine(46) in tRNA + S-adenosyl-L-methionine = N(7)-methylguanosine(46) in tRNA + S-adenosyl-L-homocysteine. It participates in tRNA modification; N(7)-methylguanine-tRNA biosynthesis. In terms of biological role, catalyzes the formation of N(7)-methylguanine at position 46 (m7G46) in tRNA. This Buchnera aphidicola subsp. Baizongia pistaciae (strain Bp) protein is tRNA (guanine-N(7)-)-methyltransferase.